Reading from the N-terminus, the 532-residue chain is Purple acid phosphatase 15 (532 aa).

The N-terminal stretch at 1–19 (MTFLLLLLFCFLSPAISSA) is a signal peptide. N-linked (GlcNAc...) asparagine glycosylation occurs at N136. D194 lines the Fe cation pocket. N-linked (GlcNAc...) asparagine glycosylation occurs at N200. Fe cation contacts are provided by D221 and Y224. D221 lines the Zn(2+) pocket. Residues N231 and N264 are each glycosylated (N-linked (GlcNAc...) asparagine). Residue N277 coordinates Zn(2+). N277 is a substrate binding site. N-linked (GlcNAc...) asparagine glycans are attached at residues N286 and N301. Residue H359 participates in Zn(2+) binding. The Proton donor role is filled by H369. H396 serves as a coordination point for Zn(2+). Substrate is bound at residue 396-398 (HVH). H398 serves as a coordination point for Fe cation. N-linked (GlcNAc...) asparagine glycosylation is present at N491.

This sequence belongs to the metallophosphoesterase superfamily. Purple acid phosphatase family. In terms of assembly, homodimer. Requires Fe cation as cofactor. Zn(2+) is required as a cofactor. Expressed in roots, stems, cotyledons, leaves, flowers and siliques.

It is found in the secreted. It carries out the reaction 1D-myo-inositol hexakisphosphate + H2O = 1D-myo-inositol 1,2,3,5,6-pentakisphosphate + phosphate. The enzyme catalyses a phosphate monoester + H2O = an alcohol + phosphate. In terms of biological role, acid phosphatase activity with p-nitrophenyl phosphate (pNPP), D-myoinositol 1-phosphate (Ins(1)P1), phytic acid and Myo-inositol hexakisphosphate. Low or no activity with Glc-6-P and ATP. Confers shoot growth stimulation, enhanced salt and osmotic stress tolerance, and ABA insensitivity. May modulate ascorbic acid (AsA) levels by controlling the input of myoinositol into this branch of AsA biosynthesis. The sequence is that of Purple acid phosphatase 15 (PAP15) from Arabidopsis thaliana (Mouse-ear cress).